A 300-amino-acid chain; its full sequence is ETS homologous factor (300 aa).

The region spanning 29–115 is the PNT domain; the sequence is PTCNVSSGFF…SNLQHLKWNG (87 aa). The interval 181-203 is disordered; it reads VAESPDMKKEQDHPVKSHTKKHN. The span at 185–195 shows a compositional bias: basic and acidic residues; the sequence is PDMKKEQDHPV. A DNA-binding region (ETS) is located at residues 207-289; the sequence is THLWEFIRDI…DGRRLVYKFG (83 aa).

The protein belongs to the ETS family. As to expression, highly expressed in kidney and lung, weakly in skeletal muscle, heart, and liver, and not detected in brain, spleen or testis.

The protein resides in the nucleus. Its function is as follows. Transcriptional activator that may play a role in regulating epithelial cell differentiation and proliferation. May act as a repressor for a specific subset of ETS/AP-1-responsive genes, and as a modulator of the nuclear response to mitogen-activated protein kinase signaling cascades. Binds to DNA sequences containing the consensus nucleotide core sequence GGAA. Involved in regulation of TNFRSF10B/DR5 expression through Ets-binding sequences on the TNFRSF10B/DR5 promoter. The sequence is that of ETS homologous factor from Mus musculus (Mouse).